The chain runs to 678 residues: Macrolide export ATP-binding/permease protein MacB 1 (678 aa).

Positions 11–249 (LRLENVSREF…PKMVDIPSVI (239 aa)) constitute an ABC transporter domain. 47–54 (GTSGSGKS) provides a ligand contact to ATP. A run of 4 helical transmembrane segments spans residues 303-323 (ALTM…VALG), 558-578 (IAVI…LVSV), 608-628 (LVCL…GLLF), and 641-661 (AASI…FGFF).

It belongs to the ABC transporter superfamily. Macrolide exporter (TC 3.A.1.122) family. As to quaternary structure, homodimer. Part of the tripartite efflux system MacAB-TolC, which is composed of an inner membrane transporter, MacB, a periplasmic membrane fusion protein, MacA, and an outer membrane component, TolC. The complex forms a large protein conduit and can translocate molecules across both the inner and outer membranes. Interacts with MacA.

The protein localises to the cell inner membrane. Part of the tripartite efflux system MacAB-TolC. MacB is a non-canonical ABC transporter that contains transmembrane domains (TMD), which form a pore in the inner membrane, and an ATP-binding domain (NBD), which is responsible for energy generation. Confers resistance against macrolides. This is Macrolide export ATP-binding/permease protein MacB 1 from Yersinia pestis bv. Antiqua (strain Nepal516).